A 147-amino-acid chain; its full sequence is Hemoglobin subunit beta-1 (147 aa).

V2 bears the N-acetylvaline mark. The Globin domain maps to 3-147 (HLTGEEKAAV…VATALAHKYH (145 aa)). Position 18 is an N6-succinyllysine (K18). S45 carries the post-translational modification Phosphoserine. K60 carries the post-translational modification N6-succinyllysine. Heme b is bound by residues H64 and H93. An Asymmetric dimethylarginine modification is found at R105. T124 carries the phosphothreonine modification.

Belongs to the globin family. Hb1 is a heterotetramer of two alpha chains and two beta-1 chains. As to expression, red blood cells.

In terms of biological role, involved in oxygen transport from the lung to the various peripheral tissues. This is Hemoglobin subunit beta-1 (HBB1) from Chalinolobus morio (Chocolate-wattled bat).